The following is a 502-amino-acid chain: Glycerol kinase (502 aa).

Thr-14 lines the ADP pocket. 3 residues coordinate ATP: Thr-14, Thr-15, and Ser-16. Thr-14 provides a ligand contact to sn-glycerol 3-phosphate. Residue Arg-18 coordinates ADP. Positions 84, 85, 136, and 246 each coordinate sn-glycerol 3-phosphate. Residues Arg-84, Glu-85, Tyr-136, Asp-246, and Gln-247 each contribute to the glycerol site. The ADP site is built by Thr-268 and Gly-311. Residues Thr-268, Gly-311, Gln-315, and Gly-412 each coordinate ATP. Gly-412 and Asn-416 together coordinate ADP.

It belongs to the FGGY kinase family. In terms of assembly, homotetramer and homodimer (in equilibrium). Heterodimer with EIIA-Glc. Binds 1 zinc ion per glycerol kinase EIIA-Glc dimer. The zinc ion is important for dimerization.

It catalyses the reaction glycerol + ATP = sn-glycerol 3-phosphate + ADP + H(+). Its pathway is polyol metabolism; glycerol degradation via glycerol kinase pathway; sn-glycerol 3-phosphate from glycerol: step 1/1. Activity of this regulatory enzyme is affected by several metabolites. Allosterically and non-competitively inhibited by fructose 1,6-bisphosphate (FBP) and unphosphorylated phosphocarrier protein EIIA-Glc (III-Glc), an integral component of the bacterial phosphotransferase (PTS) system. Its function is as follows. Key enzyme in the regulation of glycerol uptake and metabolism. Catalyzes the phosphorylation of glycerol to yield sn-glycerol 3-phosphate. This chain is Glycerol kinase, found in Salmonella agona (strain SL483).